Reading from the N-terminus, the 186-residue chain is Translation initiation factor IF-3 (186 aa).

A disordered region spans residues 1 to 20 (MINRSAGKDRDRSRSGDKEL).

The protein belongs to the IF-3 family. As to quaternary structure, monomer.

It localises to the cytoplasm. In terms of biological role, IF-3 binds to the 30S ribosomal subunit and shifts the equilibrium between 70S ribosomes and their 50S and 30S subunits in favor of the free subunits, thus enhancing the availability of 30S subunits on which protein synthesis initiation begins. This chain is Translation initiation factor IF-3, found in Borrelia hermsii (strain HS1 / DAH).